The primary structure comprises 91 residues: Probable Fe(2+)-trafficking protein (91 aa).

It belongs to the Fe(2+)-trafficking protein family.

Could be a mediator in iron transactions between iron acquisition and iron-requiring processes, such as synthesis and/or repair of Fe-S clusters in biosynthetic enzymes. In Cellvibrio japonicus (strain Ueda107) (Pseudomonas fluorescens subsp. cellulosa), this protein is Probable Fe(2+)-trafficking protein.